The chain runs to 100 residues: Urease subunit gamma (100 aa).

This sequence belongs to the urease gamma subunit family. In terms of assembly, heterotrimer of UreA (gamma), UreB (beta) and UreC (alpha) subunits. Three heterotrimers associate to form the active enzyme.

It is found in the cytoplasm. It carries out the reaction urea + 2 H2O + H(+) = hydrogencarbonate + 2 NH4(+). It participates in nitrogen metabolism; urea degradation; CO(2) and NH(3) from urea (urease route): step 1/1. This is Urease subunit gamma from Yersinia bercovieri.